The chain runs to 717 residues: Ribosomal RNA large subunit methyltransferase K/L (717 aa).

The 112-residue stretch at 43–154 folds into the THUMP domain; sequence IGYKACLWSR…KGKANITLDL (112 aa).

This sequence belongs to the methyltransferase superfamily. RlmKL family.

The protein resides in the cytoplasm. The catalysed reaction is guanosine(2445) in 23S rRNA + S-adenosyl-L-methionine = N(2)-methylguanosine(2445) in 23S rRNA + S-adenosyl-L-homocysteine + H(+). The enzyme catalyses guanosine(2069) in 23S rRNA + S-adenosyl-L-methionine = N(2)-methylguanosine(2069) in 23S rRNA + S-adenosyl-L-homocysteine + H(+). In terms of biological role, specifically methylates the guanine in position 2445 (m2G2445) and the guanine in position 2069 (m7G2069) of 23S rRNA. This chain is Ribosomal RNA large subunit methyltransferase K/L, found in Aeromonas hydrophila subsp. hydrophila (strain ATCC 7966 / DSM 30187 / BCRC 13018 / CCUG 14551 / JCM 1027 / KCTC 2358 / NCIMB 9240 / NCTC 8049).